A 200-amino-acid polypeptide reads, in one-letter code: N-(5'-phosphoribosyl)anthranilate isomerase (200 aa).

Belongs to the TrpF family.

It catalyses the reaction N-(5-phospho-beta-D-ribosyl)anthranilate = 1-(2-carboxyphenylamino)-1-deoxy-D-ribulose 5-phosphate. Its pathway is amino-acid biosynthesis; L-tryptophan biosynthesis; L-tryptophan from chorismate: step 3/5. In Endomicrobium trichonymphae, this protein is N-(5'-phosphoribosyl)anthranilate isomerase.